We begin with the raw amino-acid sequence, 98 residues long: NADH-ubiquinone oxidoreductase chain 4L (98 aa).

A run of 3 helical transmembrane segments spans residues 1–21, 29–49, and 59–79; these read MSLIHMNIIMAFTLSLVGLLM, ALLCMEGMMLSLFILATLTAL, and MPIILLVFAACEAAIGLALLV.

Belongs to the complex I subunit 4L family. As to quaternary structure, core subunit of respiratory chain NADH dehydrogenase (Complex I) which is composed of 45 different subunits.

The protein localises to the mitochondrion inner membrane. It catalyses the reaction a ubiquinone + NADH + 5 H(+)(in) = a ubiquinol + NAD(+) + 4 H(+)(out). Its function is as follows. Core subunit of the mitochondrial membrane respiratory chain NADH dehydrogenase (Complex I) which catalyzes electron transfer from NADH through the respiratory chain, using ubiquinone as an electron acceptor. Part of the enzyme membrane arm which is embedded in the lipid bilayer and involved in proton translocation. This is NADH-ubiquinone oxidoreductase chain 4L (MT-ND4L) from Hyperoodon ampullatus (Northern bottlenose whale).